The primary structure comprises 610 residues: Estrogen receptor beta-2 (610 aa).

Positions 1–170 (MSSSTGPAPA…GILGKGDTHF (170 aa)) are modulating. 2 consecutive NR C4-type zinc fingers follow at residues 171–191 (CAVC…CEGC) and 207–231 (CPAT…LRKC). A DNA-binding region (nuclear receptor) is located at residues 171-236 (CAVCHDYASG…RLRKCYEVGM (66 aa)). Residues 302 to 538 (SPEQLVNCIL…DLLLEMLDAN (237 aa)) enclose the NR LBD domain. Residues 566 to 596 (HTSKQQPALKESNQDTRHSPQAEGTVDKTLH) are disordered. Residues 577–596 (SNQDTRHSPQAEGTVDKTLH) are compositionally biased toward basic and acidic residues.

It belongs to the nuclear hormone receptor family. NR3 subfamily. In terms of assembly, binds DNA as a homodimer. Can form a heterodimer with ER-alpha. As to expression, predominantly expressed in pituitary, telencephalon and hypothalamus as well as in the liver.

Its subcellular location is the nucleus. Its function is as follows. Binds estrogens with an affinity similar to that of ER-alpha, and activates expression of reporter genes containing estrogen response elements (ERE) in an estrogen-dependent manner. The polypeptide is Estrogen receptor beta-2 (esr2b) (Carassius auratus (Goldfish)).